A 493-amino-acid chain; its full sequence is Galactose-1-phosphate uridylyltransferase (493 aa).

It belongs to the galactose-1-phosphate uridylyltransferase type 2 family.

Its subcellular location is the cytoplasm. The enzyme catalyses alpha-D-galactose 1-phosphate + UDP-alpha-D-glucose = alpha-D-glucose 1-phosphate + UDP-alpha-D-galactose. Its pathway is carbohydrate metabolism; galactose metabolism. The sequence is that of Galactose-1-phosphate uridylyltransferase from Streptococcus salivarius.